A 135-amino-acid polypeptide reads, in one-letter code: Large ribosomal subunit protein mL41B (135 aa).

The N-terminal 13 residues, 1 to 13 (MGLITKIARGLVR), are a transit peptide targeting the mitochondrion.

This sequence belongs to the mitochondrion-specific ribosomal protein mL41 family. In terms of assembly, component of the mitochondrial ribosome large subunit (39S) which comprises a 16S rRNA and about 50 distinct proteins.

It localises to the mitochondrion. Component of the mitochondrial ribosome large subunit. Also involved in apoptosis and cell cycle. This Xenopus laevis (African clawed frog) protein is Large ribosomal subunit protein mL41B (mrpl41-b).